A 276-amino-acid chain; its full sequence is 3-methyl-2-oxobutanoate hydroxymethyltransferase (276 aa).

Residues D45 and D84 each coordinate Mg(2+). 3-methyl-2-oxobutanoate-binding positions include 45–46, D84, and K114; that span reads DS. E116 is a binding site for Mg(2+). E183 functions as the Proton acceptor in the catalytic mechanism.

This sequence belongs to the PanB family. As to quaternary structure, homodecamer; pentamer of dimers. It depends on Mg(2+) as a cofactor.

It is found in the cytoplasm. The catalysed reaction is 3-methyl-2-oxobutanoate + (6R)-5,10-methylene-5,6,7,8-tetrahydrofolate + H2O = 2-dehydropantoate + (6S)-5,6,7,8-tetrahydrofolate. It functions in the pathway cofactor biosynthesis; (R)-pantothenate biosynthesis; (R)-pantoate from 3-methyl-2-oxobutanoate: step 1/2. Functionally, catalyzes the reversible reaction in which hydroxymethyl group from 5,10-methylenetetrahydrofolate is transferred onto alpha-ketoisovalerate to form ketopantoate. The protein is 3-methyl-2-oxobutanoate hydroxymethyltransferase of Carboxydothermus hydrogenoformans (strain ATCC BAA-161 / DSM 6008 / Z-2901).